Reading from the N-terminus, the 365-residue chain is 3-dehydroquinate synthase (365 aa).

NAD(+)-binding positions include 106–110 (GVIGD), 130–131 (TT), Lys142, Lys151, and 169–172 (FFAT). Residues Glu184, His247, and His264 each coordinate Zn(2+).

It belongs to the sugar phosphate cyclases superfamily. Dehydroquinate synthase family. It depends on NAD(+) as a cofactor. Co(2+) is required as a cofactor. The cofactor is Zn(2+).

It is found in the cytoplasm. The enzyme catalyses 7-phospho-2-dehydro-3-deoxy-D-arabino-heptonate = 3-dehydroquinate + phosphate. It functions in the pathway metabolic intermediate biosynthesis; chorismate biosynthesis; chorismate from D-erythrose 4-phosphate and phosphoenolpyruvate: step 2/7. Functionally, catalyzes the conversion of 3-deoxy-D-arabino-heptulosonate 7-phosphate (DAHP) to dehydroquinate (DHQ). This chain is 3-dehydroquinate synthase, found in Listeria innocua serovar 6a (strain ATCC BAA-680 / CLIP 11262).